We begin with the raw amino-acid sequence, 840 residues long: MKLSPREVEKLGLHNAGYLAQKRLARGVRLNYTEAVALIASQIMEYARDGEKTVAQLMCLGQHLLGRRQVLPAVPHLLNAVQVEATFPDGTKLVTVHDPISRENGELQEALFGSLLPVPSLDKFAETKEDNRIPGEILCEDECLTLNIGRKAVILKVTSKGDRPIQVGSHYHFIEVNPYLTFDRRKAYGMRLNIAAGTAVRFEPGDCKSVTLVSIEGNKVIRGGNAIADGPVNETNLEAAMHAVRSKGFGHEEEKDASEGFTKEDPNCPFNTFIHRKEYANKYGPTTGDKIRLGDTNLLAEIEKDYALYGDECVFGGGKVIRDGMGQSCGHPPAISLDTVITNAVIIDYTGIIKADIGIKDGLIASIGKAGNPDIMNGVFSNMIIGANTEVIAGEGLIVTAGAIDCHVHYICPQLVYEAISSGITTLVGGGTGPAAGTRATTCTPSPTQMRLMLQSTDDLPLNFGFTGKGSSSKPDELHEIIKAGAMGLKLHEDWGSTPAAIDNCLTIAEHHDIQINIHTDTLNEAGFVEHSIAAFKGRTIHTYHSEGAGGGHAPDIIKVCGIKNVLPSSTNPTRPLTSNTIDEHLDMLMVCHHLDREIPEDLAFAHSRIRKKTIAAEDVLNDIGAISIISSDSQAMGRVGEVISRTWQTADKMKAQTGPLKCDSSDNDNFRIRRYIAKYTINPAIANGFSQYVGSVEVGKLADLVMWKPSFFGTKPEMVIKGGMVAWADIGDPNASIPTPEPVKMRPMYGTLGKAGGALSIAFVSKAALDQRVNVLYGLNKRVEAVSNVRKLTKLDMKLNDALPEITVDPESYTVKADGKLLCVSEATTVPLSRNYFLF.

The Urease domain maps to 402–840 (GAIDCHVHYI…VPLSRNYFLF (439 aa)). Ni(2+) contacts are provided by H407, H409, and K490. K490 bears the N6-carboxylysine mark. Position 492 (H492) interacts with substrate. Positions 519 and 545 each coordinate Ni(2+). The active-site Proton donor is the H593. D633 serves as a coordination point for Ni(2+).

This sequence in the C-terminal section; belongs to the metallo-dependent hydrolases superfamily. Urease alpha subunit family. Homohexamer. Other oligomeric forms may exist depending on pH and presence of salts. The cofactor is Ni cation. In terms of processing, carboxylation allows a single lysine to coordinate two nickel ions.

It carries out the reaction urea + 2 H2O + H(+) = hydrogencarbonate + 2 NH4(+). Its pathway is nitrogen metabolism; urea degradation; CO(2) and NH(3) from urea (urease route): step 1/1. Its activity is regulated as follows. P-hydroxymercuribenzoate irreversibly abolishes ureolytic activity, but does not inhibit the ability to activate platelets. Also inhibited by acetohydroxamic acid (AHA), a chelator of Ni2+ and Zn2+ ions. In terms of biological role, urea hydrolase involved in nitrogen recycling from ureide, purine, and arginine catabolism. Is known to be highly toxic and lethal when given by intravenous route, producing convulsions and other signs of central nervous system intoxication associated with the high levels of ammonia formed in the blood of mice and rabbits. Is neurotoxic in mammals, when directly injected into hippocampus. It may induce seizures by acting at a neuronal network level, thereby disturbing electroencephalographic rhythms and causing metabolic alterations in key areas related to epileptogenesis and to neurogenic pulmonary edema. It increases calcium influx and neuronal firing rate in the hippocampus. Is able to insert itself into lipid bilayers, altering physicochemical properties of artificial membranes, and forming cation-selective ion channels. In vitro, has the ability to induce platelet aggregation, platelet granules secretion and release of ATP. In contrast to canatoxin, another urease from C.ensiformis, is not lethal to mice when intraperitoneally injected. The chain is Urease from Canavalia ensiformis (Jack bean).